A 603-amino-acid chain; its full sequence is Golgin subfamily A member 8B (603 aa).

4 disordered regions span residues 1–82, 95–125, 398–419, and 460–492; these read MAEE…NSRS, LKQQ…ELEG, TSAE…ESSG, and PGDS…GAAG. Over residues 46-66 the composition is skewed to low complexity; the sequence is AASGGCHSSEASSSASSSLHA. Polar residues predominate over residues 69 to 82; sequence SPCQEQAAVLNSRS. Coiled coils occupy residues 82–173 and 212–440; these read SIKI…GELE and LKGH…LELG. Residues 100–124 show a composition bias toward basic and acidic residues; the sequence is KQVEHQLEEEKKANNEKQKAERELE. Residues 469 to 482 show a composition bias toward gly residues; that stretch reads PGGGHHQAGPGQGG. The interval 491 to 603 is golgi-targeting domain; sequence AGDGVAACGS…CWAWLPRRRR (113 aa).

Belongs to the GOLGA8 family. As to expression, highly expressed in brain, heart and kidney. Detected at lower levels in liver, thymus, spleen, lung and peripheral blood leukocytes.

Its subcellular location is the golgi apparatus. The protein resides in the golgi stack membrane. Functionally, may be involved in maintaining Golgi structure. The chain is Golgin subfamily A member 8B (GOLGA8B) from Homo sapiens (Human).